The primary structure comprises 343 residues: 3-dehydroquinate synthase (343 aa).

NAD(+) is bound by residues S61 to K66, G95 to D99, T119 to T120, K132, K141, and F159 to T162. The Zn(2+) site is built by E174, H231, and H248.

The protein belongs to the sugar phosphate cyclases superfamily. Dehydroquinate synthase family. Co(2+) is required as a cofactor. It depends on Zn(2+) as a cofactor. NAD(+) serves as cofactor.

It is found in the cytoplasm. It catalyses the reaction 7-phospho-2-dehydro-3-deoxy-D-arabino-heptonate = 3-dehydroquinate + phosphate. It participates in metabolic intermediate biosynthesis; chorismate biosynthesis; chorismate from D-erythrose 4-phosphate and phosphoenolpyruvate: step 2/7. Catalyzes the conversion of 3-deoxy-D-arabino-heptulosonate 7-phosphate (DAHP) to dehydroquinate (DHQ). The protein is 3-dehydroquinate synthase of Helicobacter pylori (strain G27).